The chain runs to 631 residues: Chaperone protein DnaK (631 aa).

Thr-175 is modified (phosphothreonine; by autocatalysis). The tract at residues 586 to 631 is disordered; it reads GAEGAAAGAGAAGAAGAGASAGSASGSDDDTVEAEVVDDDDDKDNK. Positions 602 to 611 are enriched in low complexity; sequence AGASAGSASG. Acidic residues predominate over residues 612–631; the sequence is SDDDTVEAEVVDDDDDKDNK.

Belongs to the heat shock protein 70 family.

Acts as a chaperone. This Bifidobacterium longum subsp. infantis (strain ATCC 15697 / DSM 20088 / JCM 1222 / NCTC 11817 / S12) protein is Chaperone protein DnaK.